Consider the following 57-residue polypeptide: Large ribosomal subunit protein bL32c (57 aa).

Belongs to the bacterial ribosomal protein bL32 family.

It is found in the plastid. The protein resides in the chloroplast. This Amborella trichopoda protein is Large ribosomal subunit protein bL32c.